We begin with the raw amino-acid sequence, 238 residues long: Orotidine 5'-phosphate decarboxylase (238 aa).

Residues Asp-18, Lys-40, 67 to 76 (DMKLLDIDNT), Thr-122, Arg-183, Gln-192, and Arg-213 each bind substrate. Lys-69 functions as the Proton donor in the catalytic mechanism.

Belongs to the OMP decarboxylase family. Type 1 subfamily. In terms of assembly, homodimer.

The enzyme catalyses orotidine 5'-phosphate + H(+) = UMP + CO2. Its pathway is pyrimidine metabolism; UMP biosynthesis via de novo pathway; UMP from orotate: step 2/2. Its function is as follows. Catalyzes the decarboxylation of orotidine 5'-monophosphate (OMP) to uridine 5'-monophosphate (UMP). In Brucella abortus (strain S19), this protein is Orotidine 5'-phosphate decarboxylase.